Here is a 78-residue protein sequence, read N- to C-terminus: Exodeoxyribonuclease 7 small subunit (78 aa).

It belongs to the XseB family. In terms of assembly, heterooligomer composed of large and small subunits.

It localises to the cytoplasm. The enzyme catalyses Exonucleolytic cleavage in either 5'- to 3'- or 3'- to 5'-direction to yield nucleoside 5'-phosphates.. In terms of biological role, bidirectionally degrades single-stranded DNA into large acid-insoluble oligonucleotides, which are then degraded further into small acid-soluble oligonucleotides. This Cutibacterium acnes (strain DSM 16379 / KPA171202) (Propionibacterium acnes) protein is Exodeoxyribonuclease 7 small subunit.